Consider the following 627-residue polypeptide: Membrane protein insertase YidC (627 aa).

A run of 6 helical transmembrane segments spans residues 3–23 (KNTV…SWLN), 376–396 (WGLI…PLAY), 450–470 (LPML…PTTI), 502–522 (FYGN…ILYI), 534–554 (EGMA…LFFF), and 558–578 (ASGL…QYMS).

This sequence belongs to the OXA1/ALB3/YidC family. Type 1 subfamily. As to quaternary structure, interacts with the Sec translocase complex via SecD. Specifically interacts with transmembrane segments of nascent integral membrane proteins during membrane integration.

The protein localises to the cell inner membrane. Required for the insertion and/or proper folding and/or complex formation of integral membrane proteins into the membrane. Involved in integration of membrane proteins that insert both dependently and independently of the Sec translocase complex, as well as at least some lipoproteins. Aids folding of multispanning membrane proteins. The chain is Membrane protein insertase YidC from Porphyromonas gingivalis (strain ATCC 33277 / DSM 20709 / CIP 103683 / JCM 12257 / NCTC 11834 / 2561).